Consider the following 297-residue polypeptide: Ribosomal RNA small subunit methyltransferase A (297 aa).

Asn-31, Leu-33, Gly-58, Glu-79, Asp-104, and Asn-129 together coordinate S-adenosyl-L-methionine.

Belongs to the class I-like SAM-binding methyltransferase superfamily. rRNA adenine N(6)-methyltransferase family. RsmA subfamily.

It is found in the cytoplasm. The enzyme catalyses adenosine(1518)/adenosine(1519) in 16S rRNA + 4 S-adenosyl-L-methionine = N(6)-dimethyladenosine(1518)/N(6)-dimethyladenosine(1519) in 16S rRNA + 4 S-adenosyl-L-homocysteine + 4 H(+). Its function is as follows. Specifically dimethylates two adjacent adenosines (A1518 and A1519) in the loop of a conserved hairpin near the 3'-end of 16S rRNA in the 30S particle. May play a critical role in biogenesis of 30S subunits. The polypeptide is Ribosomal RNA small subunit methyltransferase A (Pediococcus pentosaceus (strain ATCC 25745 / CCUG 21536 / LMG 10740 / 183-1w)).